The chain runs to 331 residues: UPF0324 membrane protein SERP0111 (331 aa).

10 consecutive transmembrane segments (helical) span residues 7–26 (ASFM…SYIL), 31–48 (ILHT…AMIY), 69–88 (LLKF…DILG), 93–115 (LLLI…NQII), 122–144 (SILL…APIL), 154–176 (SVGI…EAIF), 183–205 (YGAW…GIGG), 249–271 (IPYF…IPSL), 275–297 (IINV…NIVL), and 308–330 (FIVI…SIMF).

This sequence belongs to the UPF0324 family.

Its subcellular location is the cell membrane. The protein is UPF0324 membrane protein SERP0111 of Staphylococcus epidermidis (strain ATCC 35984 / DSM 28319 / BCRC 17069 / CCUG 31568 / BM 3577 / RP62A).